Reading from the N-terminus, the 472-residue chain is Methanethiol oxidase (472 aa).

The protein belongs to the selenium-binding protein family.

It localises to the nucleus. It is found in the cytoplasm. The protein resides in the cytosol. Its subcellular location is the membrane. It catalyses the reaction methanethiol + O2 + H2O = hydrogen sulfide + formaldehyde + H2O2 + H(+). It functions in the pathway organosulfur degradation. Its function is as follows. Catalyzes the oxidation of methanethiol, an organosulfur compound known to be produced in substantial amounts by gut bacteria. Selenium-binding protein which may be involved in the sensing of reactive xenobiotics in the cytoplasm. May be involved in intra-Golgi protein transport. This Xenopus laevis (African clawed frog) protein is Methanethiol oxidase (selenbp1-a).